The sequence spans 406 residues: Cysteine desulfurase (406 aa).

Residue lysine 226 is modified to N6-(pyridoxal phosphate)lysine. Cysteine 364 functions as the Cysteine persulfide intermediate in the catalytic mechanism.

It belongs to the class-V pyridoxal-phosphate-dependent aminotransferase family. Csd subfamily. In terms of assembly, homodimer. Interacts with SufE and the SufBCD complex composed of SufB, SufC and SufD. The interaction with SufE is required to mediate the direct transfer of the sulfur atom from the S-sulfanylcysteine. It depends on pyridoxal 5'-phosphate as a cofactor.

The protein localises to the cytoplasm. The enzyme catalyses (sulfur carrier)-H + L-cysteine = (sulfur carrier)-SH + L-alanine. It catalyses the reaction L-selenocysteine + AH2 = hydrogenselenide + L-alanine + A + H(+). It participates in cofactor biosynthesis; iron-sulfur cluster biosynthesis. Cysteine desulfurases mobilize the sulfur from L-cysteine to yield L-alanine, an essential step in sulfur metabolism for biosynthesis of a variety of sulfur-containing biomolecules. Component of the suf operon, which is activated and required under specific conditions such as oxidative stress and iron limitation. Acts as a potent selenocysteine lyase in vitro, that mobilizes selenium from L-selenocysteine. Selenocysteine lyase activity is however unsure in vivo. The protein is Cysteine desulfurase of Escherichia coli O7:K1 (strain IAI39 / ExPEC).